The primary structure comprises 230 residues: Leucyl/phenylalanyl-tRNA--protein transferase (230 aa).

Belongs to the L/F-transferase family.

The protein resides in the cytoplasm. It carries out the reaction N-terminal L-lysyl-[protein] + L-leucyl-tRNA(Leu) = N-terminal L-leucyl-L-lysyl-[protein] + tRNA(Leu) + H(+). The enzyme catalyses N-terminal L-arginyl-[protein] + L-leucyl-tRNA(Leu) = N-terminal L-leucyl-L-arginyl-[protein] + tRNA(Leu) + H(+). It catalyses the reaction L-phenylalanyl-tRNA(Phe) + an N-terminal L-alpha-aminoacyl-[protein] = an N-terminal L-phenylalanyl-L-alpha-aminoacyl-[protein] + tRNA(Phe). Functions in the N-end rule pathway of protein degradation where it conjugates Leu, Phe and, less efficiently, Met from aminoacyl-tRNAs to the N-termini of proteins containing an N-terminal arginine or lysine. This Erwinia tasmaniensis (strain DSM 17950 / CFBP 7177 / CIP 109463 / NCPPB 4357 / Et1/99) protein is Leucyl/phenylalanyl-tRNA--protein transferase.